The sequence spans 206 residues: Large ribosomal subunit protein uL4 (206 aa).

This sequence belongs to the universal ribosomal protein uL4 family. As to quaternary structure, part of the 50S ribosomal subunit.

One of the primary rRNA binding proteins, this protein initially binds near the 5'-end of the 23S rRNA. It is important during the early stages of 50S assembly. It makes multiple contacts with different domains of the 23S rRNA in the assembled 50S subunit and ribosome. Its function is as follows. Forms part of the polypeptide exit tunnel. The polypeptide is Large ribosomal subunit protein uL4 (Methylorubrum extorquens (strain CM4 / NCIMB 13688) (Methylobacterium extorquens)).